Consider the following 1058-residue polypeptide: Carbamoyl phosphate synthase large chain (1058 aa).

The tract at residues 1–401 (MPKRKDIKTI…SLLKAIRSLE (401 aa)) is carboxyphosphate synthetic domain. Arg129, Arg169, Gly175, Gly176, Lys208, Ile210, Glu215, Gly241, Ile242, His243, Gln284, and Glu298 together coordinate ATP. In terms of domain architecture, ATP-grasp 1 spans 133-327 (RDLMNELNEP…IAKIAAKIAV (195 aa)). Mg(2+) is bound by residues Gln284, Glu298, and Asn300. 3 residues coordinate Mn(2+): Gln284, Glu298, and Asn300. Positions 402–546 (YGVHHLGLPN…YSTYEFENES (145 aa)) are oligomerization domain. The segment at 547–929 (TRSDKEKIVV…ALYKGLTAAG (383 aa)) is carbamoyl phosphate synthetic domain. In terms of domain architecture, ATP-grasp 2 spans 671–861 (EKLLIGLKIP…VANIAMQCIL (191 aa)). The ATP site is built by Arg707, Arg746, Leu748, Glu752, Gly777, Val778, His779, Ser780, Gln820, and Glu832. Gln820, Glu832, and Asn834 together coordinate Mg(2+). Residues Gln820, Glu832, and Asn834 each coordinate Mn(2+). An MGS-like domain is found at 930-1058 (IKIKDYGRVL…ESMSFRVQTL (129 aa)). The interval 930–1058 (IKIKDYGRVL…ESMSFRVQTL (129 aa)) is allosteric domain.

It belongs to the CarB family. Composed of two chains; the small (or glutamine) chain promotes the hydrolysis of glutamine to ammonia, which is used by the large (or ammonia) chain to synthesize carbamoyl phosphate. Tetramer of heterodimers (alpha,beta)4. Mg(2+) is required as a cofactor. It depends on Mn(2+) as a cofactor.

The catalysed reaction is hydrogencarbonate + L-glutamine + 2 ATP + H2O = carbamoyl phosphate + L-glutamate + 2 ADP + phosphate + 2 H(+). The enzyme catalyses hydrogencarbonate + NH4(+) + 2 ATP = carbamoyl phosphate + 2 ADP + phosphate + 2 H(+). Its pathway is amino-acid biosynthesis; L-arginine biosynthesis; carbamoyl phosphate from bicarbonate: step 1/1. It participates in pyrimidine metabolism; UMP biosynthesis via de novo pathway; (S)-dihydroorotate from bicarbonate: step 1/3. Its function is as follows. Large subunit of the glutamine-dependent carbamoyl phosphate synthetase (CPSase). CPSase catalyzes the formation of carbamoyl phosphate from the ammonia moiety of glutamine, carbonate, and phosphate donated by ATP, constituting the first step of 2 biosynthetic pathways, one leading to arginine and/or urea and the other to pyrimidine nucleotides. The large subunit (synthetase) binds the substrates ammonia (free or transferred from glutamine from the small subunit), hydrogencarbonate and ATP and carries out an ATP-coupled ligase reaction, activating hydrogencarbonate by forming carboxy phosphate which reacts with ammonia to form carbamoyl phosphate. The chain is Carbamoyl phosphate synthase large chain from Fusobacterium nucleatum subsp. nucleatum (strain ATCC 25586 / DSM 15643 / BCRC 10681 / CIP 101130 / JCM 8532 / KCTC 2640 / LMG 13131 / VPI 4355).